The chain runs to 50 residues: Sperm protamine P1 (50 aa).

Intrachain disulfides connect Cys-7/Cys-15 and Cys-39/Cys-47.

The protein belongs to the protamine P1 family. In terms of assembly, cross-linked by interchain disulfide bonds around the DNA-helix. As to expression, testis.

The protein localises to the nucleus. It is found in the chromosome. Protamines substitute for histones in the chromatin of sperm during the haploid phase of spermatogenesis. They compact sperm DNA into a highly condensed, stable and inactive complex. This is Sperm protamine P1 (PRM1) from Oryctolagus cuniculus (Rabbit).